A 286-amino-acid polypeptide reads, in one-letter code: Pantothenate synthetase (286 aa).

30–37 contacts ATP; that stretch reads MGNLHDGH. H37 functions as the Proton donor in the catalytic mechanism. Q61 is a (R)-pantoate binding site. Q61 is a beta-alanine binding site. 149–152 contacts ATP; sequence GEKD. Position 155 (Q155) interacts with (R)-pantoate. ATP contacts are provided by residues V178 and 186–189; that span reads LSSR.

Belongs to the pantothenate synthetase family. Homodimer.

The protein localises to the cytoplasm. It carries out the reaction (R)-pantoate + beta-alanine + ATP = (R)-pantothenate + AMP + diphosphate + H(+). The protein operates within cofactor biosynthesis; (R)-pantothenate biosynthesis; (R)-pantothenate from (R)-pantoate and beta-alanine: step 1/1. In terms of biological role, catalyzes the condensation of pantoate with beta-alanine in an ATP-dependent reaction via a pantoyl-adenylate intermediate. The protein is Pantothenate synthetase of Edwardsiella ictaluri (strain 93-146).